A 320-amino-acid polypeptide reads, in one-letter code: MVSSPARPIRIGSRKSQLALVQTHWVQGELQRLYPDRQFDVQTMSTQGDIILDVALAKIGDKGLFTKELEVAMLAGEVDFAVHSLKDLPTRLPEGLILGCVTEREDPADALVVHDRFKDHQLETLPEGTVIGTSSLRRLAQLRHHYPHLQFKDVRGNLNTRLAKLDAGEYDALILAAAGLQRLSMADRIHQLIPAAVSLHAVGQGALGIECRAEDPEILELLKALEHEPTSQRCLAERAFLRELEGGCQVPIGVNTAIADGTLTLTGMVASLDGQRLLRDQVSGPTSDPEALGLALAAQLKAQGAKEILDEIFATVRPEA.

S-(dipyrrolylmethanemethyl)cysteine is present on C248.

Belongs to the HMBS family. As to quaternary structure, monomer. Requires dipyrromethane as cofactor.

It catalyses the reaction 4 porphobilinogen + H2O = hydroxymethylbilane + 4 NH4(+). It participates in porphyrin-containing compound metabolism; protoporphyrin-IX biosynthesis; coproporphyrinogen-III from 5-aminolevulinate: step 2/4. The protein operates within porphyrin-containing compound metabolism; chlorophyll biosynthesis. Its function is as follows. Tetrapolymerization of the monopyrrole PBG into the hydroxymethylbilane pre-uroporphyrinogen in several discrete steps. In Synechococcus elongatus (strain ATCC 33912 / PCC 7942 / FACHB-805) (Anacystis nidulans R2), this protein is Porphobilinogen deaminase.